Reading from the N-terminus, the 434-residue chain is Transcription initiation factor IIE subunit alpha (434 aa).

Residues 8 to 99 form the HTH TFE/IIEalpha-type domain; that stretch reads VQRLIKMIMR…DFCSTIDSIK (92 aa). A C4-type zinc finger spans residues 124–151; sequence CPFCNKKFSSLDVLSLVTNEGTFACNVC. Disordered regions lie at residues 217–251, 357–408, and 415–434; these read QQNL…EKRE, STDY…EMQE, and INGF…FEDV. Positions 226–238 are enriched in polar residues; the sequence is DVRLSTSSPSITV. Basic and acidic residues-rich tracts occupy residues 241-251 and 376-385; these read SADKETDEKRE and IQNKRTKSIE. The segment covering 386–399 has biased composition (polar residues); the sequence is ENNSLPPIVSTNGI. Positions 419–434 are enriched in acidic residues; that stretch reads NEDDEDDEDEADFEDV.

Belongs to the TFIIE alpha subunit family. As to quaternary structure, TFIIE is a tetramer of two alpha (tfa1) and two beta (tfa2) subunits.

Its subcellular location is the nucleus. Functionally, recruits TFIIH to the initiation complex and stimulates the RNA polymerase II C-terminal domain kinase and DNA-dependent ATPase activities of TFIIH. Both TFIIH and TFIIE are required for promoter clearance by RNA polymerase. This Schizosaccharomyces pombe (strain 972 / ATCC 24843) (Fission yeast) protein is Transcription initiation factor IIE subunit alpha (tfa1).